The following is a 471-amino-acid chain: Tryptophan--tRNA ligase, cytoplasmic (471 aa).

The WHEP-TRS domain maps to 8–64 (SLLELFNSIATQGELVRSLKAGNASKDEIDSAVKMLVSLKMSYKAAAGEDYKADCPP). The disordered stretch occupies residues 59 to 79 (KADCPPGNPAPTSNHGPDATE). At lysine 154 the chain carries N6-succinyllysine. Positions 164-173 (PSSEAMHVGH) match the 'HIGH' region motif. The short motif at 349–353 (KMSAS) is the 'KMSKS' region element. A Phosphoserine modification is found at serine 351.

The protein belongs to the class-I aminoacyl-tRNA synthetase family. Homodimer. Interacts with an oxidized form of GAPDH. GAPDH stimulates the aminoacylation activity of isoform 2. In terms of processing, proteolytic cleavage generates 2 forms; T1-TrpRS and T2-TrpRS.

Its subcellular location is the cytoplasm. The enzyme catalyses tRNA(Trp) + L-tryptophan + ATP = L-tryptophyl-tRNA(Trp) + AMP + diphosphate + H(+). Functionally, catalyzes the attachment of tryptophan to tRNA(Trp) in a two-step reaction: tryptophan is first activated by ATP to form Trp-AMP and then transferred to the acceptor end of the tRNA(Trp). In terms of biological role, has no angiostatic activity. Its function is as follows. Possesses an angiostatic activity but has no aminoacylation activity. Inhibits fluid shear stress-activated responses of endothelial cells. Regulates ERK, Akt, and eNOS activation pathways that are associated with angiogenesis, cytoskeletal reorganization and shear stress-responsive gene expression. Has an angiostatic activity. The polypeptide is Tryptophan--tRNA ligase, cytoplasmic (Homo sapiens (Human)).